A 394-amino-acid polypeptide reads, in one-letter code: Elongation factor Tu 1 (394 aa).

A tr-type G domain is found at K10–E204. A G1 region spans residues G19–T26. G19 to T26 contributes to the GTP binding site. Position 26 (T26) interacts with Mg(2+). Residues G60–N64 form a G2 region. The segment at D81–G84 is G3. Residues D81–H85 and N136–D139 contribute to the GTP site. The segment at N136–D139 is G4. The tract at residues S174–L176 is G5.

This sequence belongs to the TRAFAC class translation factor GTPase superfamily. Classic translation factor GTPase family. EF-Tu/EF-1A subfamily. In terms of assembly, monomer.

The protein resides in the cytoplasm. It carries out the reaction GTP + H2O = GDP + phosphate + H(+). GTP hydrolase that promotes the GTP-dependent binding of aminoacyl-tRNA to the A-site of ribosomes during protein biosynthesis. The polypeptide is Elongation factor Tu 1 (Yersinia pestis bv. Antiqua (strain Nepal516)).